We begin with the raw amino-acid sequence, 312 residues long: MNITFLGTSSGVPSLTRNVSSLALKLSQSSEVWLFDCGEGTQHQIMKSNIKSSQIKKIFITHMHGDHIYGLPGLLATLGLSGNSEGIQIYGPSGLRSFINSSLKSSFCKLSFPLNFVEVENFASENKILFENNKIKVNCACLKHKIPAYGYRVSEKDKPGIFDIKKAESLKIAPGPIYSELQQGKKVVLADGRTFDGKEFCGPPRKGESFVYCTDTVFSESAVSLSKNADLLVHESTFSVEDESMAYEKLHSTTIMAAKTALLSNTKKLIITHLSPRYTNKNAITPSDLLKEAQKVFPNTYLAKDFLTAEIK.

7 residues coordinate Zn(2+): His62, His64, Asp66, His67, His144, Asp215, and His273. Asp66 serves as the catalytic Proton acceptor.

The protein belongs to the RNase Z family. As to quaternary structure, homodimer. Zn(2+) serves as cofactor.

It catalyses the reaction Endonucleolytic cleavage of RNA, removing extra 3' nucleotides from tRNA precursor, generating 3' termini of tRNAs. A 3'-hydroxy group is left at the tRNA terminus and a 5'-phosphoryl group is left at the trailer molecule.. Functionally, zinc phosphodiesterase, which displays some tRNA 3'-processing endonuclease activity. Probably involved in tRNA maturation, by removing a 3'-trailer from precursor tRNA. The polypeptide is Ribonuclease Z (Prochlorococcus marinus (strain MIT 9301)).